Consider the following 376-residue polypeptide: Lipid-A-disaccharide synthase (376 aa).

It belongs to the LpxB family.

It catalyses the reaction a lipid X + a UDP-2-N,3-O-bis[(3R)-3-hydroxyacyl]-alpha-D-glucosamine = a lipid A disaccharide + UDP + H(+). The protein operates within bacterial outer membrane biogenesis; LPS lipid A biosynthesis. In terms of biological role, condensation of UDP-2,3-diacylglucosamine and 2,3-diacylglucosamine-1-phosphate to form lipid A disaccharide, a precursor of lipid A, a phosphorylated glycolipid that anchors the lipopolysaccharide to the outer membrane of the cell. This is Lipid-A-disaccharide synthase from Coxiella burnetii (strain CbuG_Q212) (Coxiella burnetii (strain Q212)).